A 147-amino-acid chain; its full sequence is Small ribosomal subunit protein uS12 (147 aa).

Belongs to the universal ribosomal protein uS12 family. In terms of assembly, part of the 30S ribosomal subunit.

With S4 and S5 plays an important role in translational accuracy. Located at the interface of the 30S and 50S subunits. In Pyrobaculum arsenaticum (strain DSM 13514 / JCM 11321 / PZ6), this protein is Small ribosomal subunit protein uS12.